A 452-amino-acid polypeptide reads, in one-letter code: 1,3-beta-glucanosyltransferase gel1 (452 aa).

A signal peptide spans 1 to 19 (MKASAVTAALAVGASTVLA). Residues C71 and C100 are joined by a disulfide bond. (1,3-beta-D-glucosyl)n is bound by residues Y89, N159, E160, D201, and R206. E160 functions as the Proton donor in the catalytic mechanism. Cystine bridges form between C215-C345 and C233-C264. An N-linked (GlcNAc...) asparagine glycan is attached at N249. Residue E261 is the Nucleophile of the active site. (1,3-beta-D-glucosyl)n is bound at residue Y292. A compositionally biased stretch (polar residues) spans 325–340 (EKTSNPSGDGNYNKTG). Residues 325–419 (EKTSNPSGDG…SGTSTSSKGA (95 aa)) form a disordered region. An N-linked (GlcNAc...) asparagine glycan is attached at N337. Low complexity predominate over residues 393 to 419 (STATAEPGSGSATGSSSSGTSTSSKGA). A lipid anchor (GPI-like-anchor amidated alanine) is attached at A419. Positions 420 to 452 (AAGLTVPSLTMAPVVVGAVTLLSTVFGAGLVLL) are cleaved as a propeptide — removed in mature form.

Belongs to the glycosyl hydrolase 72 family. Post-translationally, the GPI-like anchor contains a phosphoceramide lipid group.

The protein localises to the cell membrane. Splits internally a 1,3-beta-glucan molecule and transfers the newly generated reducing end (the donor) to the non-reducing end of another 1,3-beta-glucan molecule (the acceptor) forming a 1,3-beta linkage, resulting in the elongation of 1,3-beta-glucan chains in the cell wall. Involved in cell wall morphogenesis. The protein is 1,3-beta-glucanosyltransferase gel1 (gel1) of Aspergillus fumigatus (strain ATCC MYA-4609 / CBS 101355 / FGSC A1100 / Af293) (Neosartorya fumigata).